A 180-amino-acid polypeptide reads, in one-letter code: Protein sll1483 (180 aa).

The N-terminal stretch at 1–26 is a signal peptide; sequence MKTAARIVAFTALTGFALGMPTVAMA. The 132-residue stretch at 45–176 folds into the FAS1 domain; the sequence is AMTIVEVAAG…GVIHVIDQVI (132 aa).

The chain is Protein sll1483 from Synechocystis sp. (strain ATCC 27184 / PCC 6803 / Kazusa).